Reading from the N-terminus, the 802-residue chain is Putative flavin carrier protein 3 (802 aa).

An N-terminal signal peptide occupies residues 1 to 28 (MRFLQVYKSSALIGLIILLASKVNLAEA). At 29–169 (KRKLVATSLV…YFSNGKTVSQ (141 aa)) the chain is on the lumenal side. Asparagine 149 carries N-linked (GlcNAc...) asparagine glycosylation. The chain crosses the membrane as a helical span at residues 170–190 (IGVKWATAVVAGIGLLLSAIL). At 191–200 (STFGNSTAAS) the chain is on the cytoplasmic side. A helical transmembrane segment spans residues 201–221 (HISANTMSLFLYFQSVVVVAM). Over 222–229 (QHVHRVPP) the chain is Lumenal. The chain crosses the membrane as a helical span at residues 230-250 (IAAAWAENLVWSMGLIRISFM). The Cytoplasmic segment spans residues 251 to 255 (QRIFR). The chain crosses the membrane as a helical span at residues 256 to 278 (WYVQSTGGTPSLYLTSTSMSVLA). Residues 279-323 (QRSWQYLMELPLIKRATNVLYGNANTLIFRGIKRLGYKMGIENTS) lie on the Lumenal side of the membrane. Asparagine 321 is a glycosylation site (N-linked (GlcNAc...) asparagine). The helical transmembrane segment at 324–344 (IVCTGFTFFVLCGYVLAGFII) threads the bilayer. Topologically, residues 345-377 (VFKCCVELATRLGWIQKARFWEFRKQWRMILKG) are cytoplasmic. A helical membrane pass occupies residues 378-398 (ALLRYIYIGFVQLTILSFWEF). Residues 399–405 (TERDSPA) lie on the Lumenal side of the membrane. A helical transmembrane segment spans residues 406-426 (VIVIACLFILLSCGLMLWAAW). Residues 427 to 467 (RTVFFARRSVALYNNPAALLYGDEYVLHKYGFFYTMFNANH) are Cytoplasmic-facing. Residues 468–488 (YWWNIVLLSYIFVKSLLVGFA) traverse the membrane as a helical segment. The Lumenal segment spans residues 489–495 (QASGQTQ). Residues 496-516 (VLFMFILDLFYFVAIIYYKPY) traverse the membrane as a helical segment. The Cytoplasmic portion of the chain corresponds to 517–525 (LDRPTNIMN). The chain crosses the membrane as a helical span at residues 526–546 (ILIATVTVVNSFLFMFFSDLF). Asparagine 547 carries an N-linked (GlcNAc...) asparagine glycan. Topologically, residues 547 to 557 (NQSYKVAAIMG) are lumenal. A helical transmembrane segment spans residues 558–578 (WIFFIMNAAFSFILLMMILAF). Residues 579-802 (AGMMLFSKNP…PPGFFDEGFM (224 aa)) are Cytoplasmic-facing. Residues serine 616 and serine 635 each carry the phosphoserine modification. The tract at residues 629–802 (KDHDDNSDYE…PPGFFDEGFM (174 aa)) is disordered. Composition is skewed to polar residues over residues 653–663 (DETTPTTVTSS), 697–717 (KQQTFPHNLTNLSRENLSTLG), and 761–788 (DTSSSDGGFRSQNYVRDDSINSLGNNKQ). 2 positions are modified to phosphoserine: serine 779 and serine 782.

Belongs to the transient receptor potential (TRP) ion channel family.

It localises to the endoplasmic reticulum membrane. May be responsible for the transport of FAD into the endoplasmic reticulum lumen, where it is required for oxidative protein folding. The sequence is that of Putative flavin carrier protein 3 (FLC3) from Saccharomyces cerevisiae (strain ATCC 204508 / S288c) (Baker's yeast).